A 1609-amino-acid chain; its full sequence is Chitin synthase 5 (1609 aa).

Disordered stretches follow at residues 1–188 (MNPF…DRER), 248–280 (SGLG…GRDE), and 294–320 (VSLR…ESKT). Residues 1–326 (MNPFESLPDA…ESKTSRIAPG (326 aa)) lie on the Cytoplasmic side of the membrane. Positions 34–44 (PGSTGRPQNPI) are enriched in polar residues. Low complexity predominate over residues 61–82 (PQQQQQQQQQQQQQQQRSQQPF). The span at 100-111 (AYLNSTSSQPTQ) shows a compositional bias: polar residues. A compositionally biased stretch (basic and acidic residues) spans 134–146 (DSVKSYGDDKRSI). Residues 147–163 (NDPNSSSTALTQVNSLD) are compositionally biased toward polar residues. Low complexity predominate over residues 253–267 (TGPTNVPPGGLGRAP). Residues 307–320 (PSKEVPRDLGESKT) are compositionally biased toward basic and acidic residues. A helical membrane pass occupies residues 327 to 347 (PVGGWMIYCYILTICCPGPFL). At 348–364 (RIFGIRTPEQQRAWREK) the chain is on the extracellular side. A helical membrane pass occupies residues 365–385 (MGLIGIITLIMAAVGFLTFGF). Residues 386-624 (TQTVCGQQPD…ASKVELYLSL (239 aa)) are Cytoplasmic-facing. Residues 625–645 (VFIIGVVAIKFFMAVMFGWFI) form a helical membrane-spanning segment. At 646-1176 (SWRLGNYANE…MRFVVFMELT (531 aa)) the chain is on the extracellular side. Asparagine 654 carries N-linked (GlcNAc...) asparagine glycosylation. Residues 729–767 (GVASPLGGSPPGSPSVAGGRSSASLAPAHSRRSSFSGSP) are disordered. A compositionally biased stretch (low complexity) spans 742-752 (PSVAGGRSSAS). Asparagine 1015 and asparagine 1144 each carry an N-linked (GlcNAc...) asparagine glycan. The helical transmembrane segment at 1177 to 1197 (GTLVLPAAIAFTLYVVVQAFL) threads the bilayer. The Cytoplasmic segment spans residues 1198–1202 (PNVPT). A helical membrane pass occupies residues 1203–1223 (PTIPLILLALILGLPGILIVV). Topologically, residues 1224–1227 (TSRK) are extracellular. Residues 1228-1248 (IAYVGWMLIYLLSLPIWNFVL) form a helical membrane-spanning segment. Over 1249-1609 (PLYAYWHMDD…PPGAAPPSFD (361 aa)) the chain is Cytoplasmic. Disordered regions lie at residues 1354 to 1381 (PNAM…PSGA) and 1399 to 1609 (TDAK…PSFD). 2 stretches are compositionally biased toward polar residues: residues 1502–1514 (NVST…TVSE) and 1530–1552 (GSAS…QTRP). The span at 1568–1588 (AQGVRQVQRGARRSQMPNSAA) shows a compositional bias: low complexity.

Belongs to the chitin synthase family. Class IV subfamily.

The protein resides in the cell membrane. It localises to the cytoplasmic vesicle membrane. It carries out the reaction [(1-&gt;4)-N-acetyl-beta-D-glucosaminyl](n) + UDP-N-acetyl-alpha-D-glucosamine = [(1-&gt;4)-N-acetyl-beta-D-glucosaminyl](n+1) + UDP + H(+). Functionally, polymerizes chitin, a structural polymer of the cell wall and septum, by transferring the sugar moiety of UDP-GlcNAc to the non-reducing end of the growing chitin polymer. The polypeptide is Chitin synthase 5 (Mycosarcoma maydis (Corn smut fungus)).